The primary structure comprises 244 residues: 7-cyano-7-deazaguanine synthase (244 aa).

14 to 24 contributes to the ATP binding site; sequence FSGGQDSATCV. The Zn(2+) site is built by Cys202, Cys217, Cys220, and Cys223.

The protein belongs to the QueC family. The cofactor is Zn(2+).

It catalyses the reaction 7-carboxy-7-deazaguanine + NH4(+) + ATP = 7-cyano-7-deazaguanine + ADP + phosphate + H2O + H(+). The protein operates within purine metabolism; 7-cyano-7-deazaguanine biosynthesis. Functionally, catalyzes the ATP-dependent conversion of 7-carboxy-7-deazaguanine (CDG) to 7-cyano-7-deazaguanine (preQ(0)). The protein is 7-cyano-7-deazaguanine synthase of Burkholderia lata (strain ATCC 17760 / DSM 23089 / LMG 22485 / NCIMB 9086 / R18194 / 383).